Reading from the N-terminus, the 239-residue chain is 3-dehydroquinate dehydratase (239 aa).

3-dehydroquinate-binding positions include 35-37 and Arg70; that span reads ELR. Catalysis depends on His133, which acts as the Proton donor/acceptor. The active-site Schiff-base intermediate with substrate is Lys160. 3-dehydroquinate-binding residues include Arg202 and Gln225.

It belongs to the type-I 3-dehydroquinase family. Homodimer.

It carries out the reaction 3-dehydroquinate = 3-dehydroshikimate + H2O. It functions in the pathway metabolic intermediate biosynthesis; chorismate biosynthesis; chorismate from D-erythrose 4-phosphate and phosphoenolpyruvate: step 3/7. Its function is as follows. Involved in the third step of the chorismate pathway, which leads to the biosynthesis of aromatic amino acids. Catalyzes the cis-dehydration of 3-dehydroquinate (DHQ) and introduces the first double bond of the aromatic ring to yield 3-dehydroshikimate. The protein is 3-dehydroquinate dehydratase of Staphylococcus saprophyticus subsp. saprophyticus (strain ATCC 15305 / DSM 20229 / NCIMB 8711 / NCTC 7292 / S-41).